The following is a 349-amino-acid chain: Prostaglandin reductase 1 (349 aa).

Thr18 is subject to Phosphothreonine. The residue at position 20 (Ser20) is a Phosphoserine. Residues 152–155 (GAVG), Lys178, Tyr193, Asn217, 239–245 (CGAISMY), 270–272 (FIF), and Asn321 each bind NADP(+). At Lys178 the chain carries N6-(2-hydroxyisobutyryl)lysine; alternate. The residue at position 178 (Lys178) is an N6-acetyllysine; alternate.

It belongs to the NADP-dependent oxidoreductase L4BD family. In terms of assembly, monomer or homodimer.

It localises to the cytoplasm. It catalyses the reaction 13,14-dihydro-15-oxo-prostaglandin E1 + NADP(+) = 15-oxoprostaglandin E1 + NADPH + H(+). It carries out the reaction 13,14-dihydro-15-oxo-prostaglandin E2 + NADP(+) = 15-oxoprostaglandin E2 + NADPH + H(+). The catalysed reaction is 13,14-dihydro-15-oxo-prostaglandin F1alpha + NADP(+) = 15-oxoprostaglandin F1alpha + NADPH + H(+). The enzyme catalyses 13,14-dihydro-15-oxo-PGF2alpha + NADP(+) = 15-oxoprostaglandin F2alpha + NADPH + H(+). It catalyses the reaction leukotriene B4 + NADP(+) = 12-oxo-leukotriene B4 + NADPH + H(+). It carries out the reaction 20-hydroxy-leukotriene B4 + NADP(+) = 12-oxo-20-hydroxy-leukotriene B4 + NADPH + H(+). The catalysed reaction is 6-trans-leukotriene B4 + NADP(+) = 12-oxo-(5S)-hydroxy-(6E,8E,10E,14Z)-eicosatetraenoate + NADPH + H(+). The enzyme catalyses (5S,12S)-dihydroxy-(6E,10E,12E,14Z)-eicosatetraenoate + NADP(+) = 12-oxo-(5S)-hydroxy-(6E,8E,10E,14Z)-eicosatetraenoate + NADPH + H(+). It catalyses the reaction an n-alkanal + NADP(+) = an alk-2-enal + NADPH + H(+). It carries out the reaction hexanal + NADP(+) = (E)-hex-2-enal + NADPH + H(+). The catalysed reaction is octanal + NADP(+) = (2E)-octenal + NADPH + H(+). The enzyme catalyses decanal + NADP(+) = (2E)-decenal + NADPH + H(+). It catalyses the reaction dodecanal + NADP(+) = (2E)-dodecenal + NADPH + H(+). It carries out the reaction 4-hydroxynonanal + NADP(+) = (E)-4-hydroxynon-2-enal + NADPH + H(+). The catalysed reaction is pentan-2-one + NADP(+) = (E)-pent-3-en-2-one + NADPH + H(+). The enzyme catalyses nonan-2-one + NADP(+) = (3E)-nonen-2-one + NADPH + H(+). NAD(P)H-dependent oxidoreductase involved in metabolic inactivation of pro- and anti-inflammatory eicosanoids: prostaglandins (PG), leukotrienes (LT) and lipoxins (LX). Catalyzes with high efficiency the reduction of the 13,14 double bond of 15-oxoPGs, including 15-oxo-PGE1, 15-oxo-PGE2, 15-oxo-PGF1-alpha and 15-oxo-PGF2-alpha. Catalyzes with lower efficiency the oxidation of the hydroxyl group at C12 of LTB4 and its derivatives, converting them into biologically less active 12-oxo-LTB4 metabolites. Reduces 15-oxo-LXA4 to 13,14 dihydro-15-oxo-LXA4, enhancing neutrophil recruitment at the inflammatory site. Plays a role in metabolic detoxification of alkenals and ketones. Reduces alpha,beta-unsaturated alkenals and ketones, particularly those with medium-chain length, showing highest affinity toward (2E)-decenal and (3E)-3-nonen-2-one. May inactivate 4-hydroxy-2-nonenal, a cytotoxic lipid constituent of oxidized low-density lipoprotein particles. This chain is Prostaglandin reductase 1 (PTGR1), found in Oryctolagus cuniculus (Rabbit).